The following is a 164-amino-acid chain: MTTAFYPGSFDPITNGHVDVLVQALNVAEKVIVAIGIHPGKAPLFSFEERAELIRLSLAEVLPGKTGDIDVVAFDNLVVDAARSHGATLLIRGLRDGTDLDYEMQMAGMNRTMAPDIQTIFLPAGTASRPITATLVRQIAAMGGDVSAFVPAAVLQALTSKRPD.

Ser-9 contributes to the substrate binding site. ATP contacts are provided by residues 9-10 and His-17; that span reads SF. Substrate contacts are provided by Lys-41, Val-78, and Arg-92. ATP-binding positions include 93–95, Glu-103, and 128–134; these read GLR and SRPITAT.

Belongs to the bacterial CoaD family. In terms of assembly, homohexamer. Requires Mg(2+) as cofactor.

It localises to the cytoplasm. It catalyses the reaction (R)-4'-phosphopantetheine + ATP + H(+) = 3'-dephospho-CoA + diphosphate. The protein operates within cofactor biosynthesis; coenzyme A biosynthesis; CoA from (R)-pantothenate: step 4/5. Its function is as follows. Reversibly transfers an adenylyl group from ATP to 4'-phosphopantetheine, yielding dephospho-CoA (dPCoA) and pyrophosphate. This Rhizobium leguminosarum bv. trifolii (strain WSM2304) protein is Phosphopantetheine adenylyltransferase.